A 1412-amino-acid chain; its full sequence is DNA-directed RNA polymerase subunit beta' (1412 aa).

Zn(2+) contacts are provided by Cys70, Cys72, Cys85, and Cys88. Mg(2+) contacts are provided by Asp460, Asp462, and Asp464. Zn(2+)-binding residues include Cys819, Cys893, Cys900, and Cys903. A disordered region spans residues 1392 to 1412 (EEAFEFGTPSTPAEEPQHPAE).

The protein belongs to the RNA polymerase beta' chain family. As to quaternary structure, the RNAP catalytic core consists of 2 alpha, 1 beta, 1 beta' and 1 omega subunit. When a sigma factor is associated with the core the holoenzyme is formed, which can initiate transcription. Mg(2+) serves as cofactor. Requires Zn(2+) as cofactor.

It catalyses the reaction RNA(n) + a ribonucleoside 5'-triphosphate = RNA(n+1) + diphosphate. Its function is as follows. DNA-dependent RNA polymerase catalyzes the transcription of DNA into RNA using the four ribonucleoside triphosphates as substrates. In Burkholderia thailandensis (strain ATCC 700388 / DSM 13276 / CCUG 48851 / CIP 106301 / E264), this protein is DNA-directed RNA polymerase subunit beta'.